Here is a 293-residue protein sequence, read N- to C-terminus: Neugrin (293 aa).

Residues 1–15 (MALSLSLFLGGRVRA) form the signal peptide. Disordered regions lie at residues 25–48 (QGVAGPGSISREPDPDSDWEPEER) and 162–211 (PLSA…EKNK). Ser-41 bears the Phosphoserine mark. N-linked (GlcNAc...) asparagine glycosylation is present at Asn-270.

It belongs to the neugrin family. As to quaternary structure, forms a regulatory protein-RNA complex, consisting of RCC1L, NGRN, RPUSD3, RPUSD4, TRUB2, FASTKD2 and 16S mt-rRNA. Interacts with 16S mt-rRNA; this interaction is direct.

The protein resides in the nucleus. Its subcellular location is the secreted. The protein localises to the mitochondrion membrane. Functionally, plays an essential role in mitochondrial ribosome biogenesis. As a component of a functional protein-RNA module, consisting of RCC1L, NGRN, RPUSD3, RPUSD4, TRUB2, FASTKD2 and 16S mitochondrial ribosomal RNA (16S mt-rRNA), controls 16S mt-rRNA abundance and is required for intra-mitochondrial translation of core subunits of the oxidative phosphorylation system. This Rattus norvegicus (Rat) protein is Neugrin (Ngrn).